The chain runs to 662 residues: Transketolase (662 aa).

Residue His-28 coordinates substrate. Thiamine diphosphate-binding positions include His-68 and 115–117; that span reads GPL. Asp-156 is a binding site for Mg(2+). Thiamine diphosphate contacts are provided by Gly-157 and Asn-186. Asn-186 and Ile-188 together coordinate Mg(2+). His-261, Arg-356, and Ser-383 together coordinate substrate. His-261 is a thiamine diphosphate binding site. The active-site Proton donor is the Glu-410. Phe-436 is a binding site for thiamine diphosphate. The substrate site is built by His-460, Asp-468, and Arg-519.

This sequence belongs to the transketolase family. As to quaternary structure, homodimer. Mg(2+) is required as a cofactor. Requires Ca(2+) as cofactor. Mn(2+) serves as cofactor. The cofactor is Co(2+). It depends on thiamine diphosphate as a cofactor.

It carries out the reaction D-sedoheptulose 7-phosphate + D-glyceraldehyde 3-phosphate = aldehydo-D-ribose 5-phosphate + D-xylulose 5-phosphate. It participates in carbohydrate biosynthesis; Calvin cycle. The protein operates within carbohydrate degradation; pentose phosphate pathway. In terms of biological role, catalyzes the transfer of a two-carbon ketol group from a ketose donor to an aldose acceptor, via a covalent intermediate with the cofactor thiamine pyrophosphate. The chain is Transketolase (tkt) from Staphylococcus epidermidis (strain ATCC 12228 / FDA PCI 1200).